Reading from the N-terminus, the 601-residue chain is Lanthanide-dependent methanol dehydrogenase (601 aa).

An N-terminal signal peptide occupies residues 1-21 (MRAVHLLALGAGLAAASPALA). Cysteines 124 and 125 form a disulfide. The pyrroloquinoline quinone site is built by Arg-130, Thr-174, Ser-189, Gly-190, and Gly-191. Glu-192 serves as a coordination point for La(3+). Cysteines 197 and 256 form a disulfide. Trp-258 lines the pyrroloquinoline quinone pocket. Residues Asn-276, Asp-318, and Asp-320 each coordinate La(3+). The active-site Proton acceptor is the Asp-318. A pyrroloquinoline quinone-binding site is contributed by Arg-345. An intrachain disulfide couples Cys-408 to Cys-437. Residues Trp-494 and Trp-558 each coordinate pyrroloquinoline quinone.

It belongs to the bacterial PQQ dehydrogenase family. In terms of assembly, homodimer. It depends on La(3+) as a cofactor. Nd(3+) is required as a cofactor. Requires pyrroloquinoline quinone as cofactor.

The protein resides in the periplasm. The enzyme catalyses 2 Fe(III)-[cytochrome cL] + methanol = 2 Fe(II)-[cytochrome cL] + formaldehyde + 2 H(+). Its function is as follows. Catalyzes the oxidation of methanol to formaldehyde, but only in the presence of lanthanides (Ln). Contributes to methanol metabolism when La(3+) is present in the natural environment of the bacterium, allowing bacterial growth with methanol as carbon and energy source. Thereby is an essential enzyme for Ln-dependent methylotrophy. Uses a specific cytochrome cL (XoxG), encoded by the adjacent gene in the locus, as electron acceptor. Also plays a role in the transcriptional regulation of the mxa and xox1 operons, most likely acting as a lanthanide sensory module. Is also able to oxidize formaldehyde to formate in vitro, but this activity does not occur in vivo. The polypeptide is Lanthanide-dependent methanol dehydrogenase (Methylorubrum extorquens (strain ATCC 14718 / DSM 1338 / JCM 2805 / NCIMB 9133 / AM1) (Methylobacterium extorquens)).